We begin with the raw amino-acid sequence, 235 residues long: Ribosomal RNA large subunit methyltransferase E (235 aa).

S-adenosyl-L-methionine contacts are provided by Gly-76, Trp-78, Asp-99, Asp-115, and Asp-139. Lys-179 (proton acceptor) is an active-site residue.

This sequence belongs to the class I-like SAM-binding methyltransferase superfamily. RNA methyltransferase RlmE family.

It localises to the cytoplasm. The catalysed reaction is uridine(2552) in 23S rRNA + S-adenosyl-L-methionine = 2'-O-methyluridine(2552) in 23S rRNA + S-adenosyl-L-homocysteine + H(+). In terms of biological role, specifically methylates the uridine in position 2552 of 23S rRNA at the 2'-O position of the ribose in the fully assembled 50S ribosomal subunit. In Rhodopseudomonas palustris (strain BisB5), this protein is Ribosomal RNA large subunit methyltransferase E.